The chain runs to 157 residues: Small ribosomal subunit protein uS7 (157 aa).

Belongs to the universal ribosomal protein uS7 family. As to quaternary structure, part of the 30S ribosomal subunit. Contacts proteins S9 and S11.

Functionally, one of the primary rRNA binding proteins, it binds directly to 16S rRNA where it nucleates assembly of the head domain of the 30S subunit. Is located at the subunit interface close to the decoding center, probably blocks exit of the E-site tRNA. The protein is Small ribosomal subunit protein uS7 of Phenylobacterium zucineum (strain HLK1).